Consider the following 604-residue polypeptide: MEERGFMSPSLAISASYREGGSKGMSRRRSMRPSFDADNEFMNLLHGSDPVRIELNRLENEVRDKDRELSEGQAEIKALRLSERQREKAVEELTEELGKMAEKLKLIENLLESKNLEIKKINEEKKASMAAQFAAEASLRRVHAAQKDDDMPPIEAILAPLEAELKLSRQEIAKLQDDNKSLDRLTKSKEAALLDAERTVQSALAKASMVDDLQNKNQELMKQIEICQEENRIIDKMHRQKVAEVEKLMQSVRELEEAVLAGGAAANAVRDYQRKFQEMNEERKILERELARAKVNANRVATVVANEWKDSNDKVMPVRQWLEERRFLQGEMQQLRDKLAIADRAAKSEAQLKEKFLLRLRVLEESLKGPTSSSSRGTSVGRSSSNGPTRRQSLGGAETSPKITSNGSLIKRTPSSQLRSLTASASTVLKHAKGTSRSFDGGTRSLDRSKVLINGPRSNFPLNHKSSEGTSRGESPSSIKGEEESADKATNNDSVPGVLYDLLQKEVITLRKAAHEKDQSLRDKDEAIEMLAKKVETLTKAMDVEAKKMRREVAVMGKEVAAMRVVDKGQQDSKTRRLSVSKGNTAQLLSGRVSGRIGMTRSTQ.

The interval 1–33 (MEERGFMSPSLAISASYREGGSKGMSRRRSMRP) is disordered. A coiled-coil region spans residues 49–351 (DPVRIELNRL…ADRAAKSEAQ (303 aa)). The segment at 233–470 (IIDKMHRQKV…PLNHKSSEGT (238 aa)) is required for targeting to microtubules. Disordered stretches follow at residues 367-422 (LKGP…RSLT) and 434-495 (GTSR…NDSV). Low complexity predominate over residues 371-385 (TSSSSRGTSVGRSSS). 2 stretches are compositionally biased toward polar residues: residues 401-422 (PKITSNGSLIKRTPSSQLRSLT) and 468-478 (EGTSRGESPSS). A coiled-coil region spans residues 521-569 (LRDKDEAIEMLAKKVETLTKAMDVEAKKMRREVAVMGKEVAAMRVVDKG).

It belongs to the MAP70 family.

It is found in the cytoplasm. Its subcellular location is the cytoskeleton. In terms of biological role, plant-specific protein that interact with microtubules. This is Microtubule-associated protein 70-4 (MAP70.4) from Arabidopsis thaliana (Mouse-ear cress).